A 275-amino-acid chain; its full sequence is Voltage-dependent calcium channel gamma-5 subunit (275 aa).

4 consecutive transmembrane segments (helical) span residues 8-28 (ALTL…GIAV), 103-123 (FPLV…IGHI), 129-149 (ILAF…VVGL), and 181-201 (FAAI…YLFM).

The protein belongs to the PMP-22/EMP/MP20 family. CACNG subfamily. The L-type calcium channel is composed of five subunits: alpha-1, alpha-2/delta, beta and gamma. Acts as an auxiliary subunit for AMPA-selective glutamate receptors (AMPARs). Found in a complex with GRIA1, GRIA2, GRIA3, GRIA4, CNIH2, CNIH3, CACNG2, CACNG3, CACNG4, CACNG7 and CACNG8. Interacts with GRIA1, GRIA2, GRIA3 and GRIA4. Brain. Enriched in Bergman glia, as well as a variety of neuronal populations including locus coeruleus, olfactory bulb, lateral septal nucleus, interpeduncular nucleus, and the CA2 and rostral/medial CA1 regions of hippocampus.

The protein localises to the membrane. It is found in the postsynaptic density membrane. Functionally, regulates the gating properties of AMPA-selective glutamate receptors (AMPARs). Modulates their gating properties by accelerating their rates of activation, deactivation and desensitization. Displays subunit-specific AMPA receptor regulation. Shows specificity for GRIA1, GRIA4 and the long isoform of GRIA2. Thought to stabilize the calcium channel in an inactivated (closed) state. The protein is Voltage-dependent calcium channel gamma-5 subunit (Cacng5) of Mus musculus (Mouse).